Reading from the N-terminus, the 404-residue chain is Cysteine desulfurase IscS (404 aa).

Pyridoxal 5'-phosphate-binding positions include 75–76 (AT), asparagine 155, glutamine 183, and 203–205 (SGH). Lysine 206 carries the post-translational modification N6-(pyridoxal phosphate)lysine. Threonine 243 lines the pyridoxal 5'-phosphate pocket. Cysteine 328 (cysteine persulfide intermediate) is an active-site residue. Cysteine 328 serves as a coordination point for [2Fe-2S] cluster.

The protein belongs to the class-V pyridoxal-phosphate-dependent aminotransferase family. NifS/IscS subfamily. In terms of assembly, homodimer. Forms a heterotetramer with IscU, interacts with other sulfur acceptors. Pyridoxal 5'-phosphate serves as cofactor.

It localises to the cytoplasm. It carries out the reaction (sulfur carrier)-H + L-cysteine = (sulfur carrier)-SH + L-alanine. Its pathway is cofactor biosynthesis; iron-sulfur cluster biosynthesis. Functionally, master enzyme that delivers sulfur to a number of partners involved in Fe-S cluster assembly, tRNA modification or cofactor biosynthesis. Catalyzes the removal of elemental sulfur atoms from cysteine to produce alanine. Functions as a sulfur delivery protein for Fe-S cluster synthesis onto IscU, an Fe-S scaffold assembly protein, as well as other S acceptor proteins. The sequence is that of Cysteine desulfurase IscS from Shewanella sp. (strain MR-4).